Consider the following 340-residue polypeptide: Phospho-N-acetylmuramoyl-pentapeptide-transferase (340 aa).

The next 10 helical transmembrane spans lie at F5–N25, T50–T70, S73–I93, F113–D133, I147–S167, G178–S198, L218–Y238, I242–L262, I267–V287, and I318–V338.

It belongs to the glycosyltransferase 4 family. MraY subfamily. The cofactor is Mg(2+).

Its subcellular location is the cell membrane. It catalyses the reaction UDP-N-acetyl-alpha-D-muramoyl-L-alanyl-gamma-D-glutamyl-meso-2,6-diaminopimeloyl-D-alanyl-D-alanine + di-trans,octa-cis-undecaprenyl phosphate = di-trans,octa-cis-undecaprenyl diphospho-N-acetyl-alpha-D-muramoyl-L-alanyl-D-glutamyl-meso-2,6-diaminopimeloyl-D-alanyl-D-alanine + UMP. Its pathway is cell wall biogenesis; peptidoglycan biosynthesis. In terms of biological role, catalyzes the initial step of the lipid cycle reactions in the biosynthesis of the cell wall peptidoglycan: transfers peptidoglycan precursor phospho-MurNAc-pentapeptide from UDP-MurNAc-pentapeptide onto the lipid carrier undecaprenyl phosphate, yielding undecaprenyl-pyrophosphoryl-MurNAc-pentapeptide, known as lipid I. In Buchnera aphidicola subsp. Baizongia pistaciae (strain Bp), this protein is Phospho-N-acetylmuramoyl-pentapeptide-transferase.